We begin with the raw amino-acid sequence, 254 residues long: 3-deoxy-manno-octulosonate cytidylyltransferase (254 aa).

This sequence belongs to the KdsB family.

It localises to the cytoplasm. It carries out the reaction 3-deoxy-alpha-D-manno-oct-2-ulosonate + CTP = CMP-3-deoxy-beta-D-manno-octulosonate + diphosphate. It functions in the pathway nucleotide-sugar biosynthesis; CMP-3-deoxy-D-manno-octulosonate biosynthesis; CMP-3-deoxy-D-manno-octulosonate from 3-deoxy-D-manno-octulosonate and CTP: step 1/1. Its pathway is bacterial outer membrane biogenesis; lipopolysaccharide biosynthesis. Its function is as follows. Activates KDO (a required 8-carbon sugar) for incorporation into bacterial lipopolysaccharide in Gram-negative bacteria. The polypeptide is 3-deoxy-manno-octulosonate cytidylyltransferase (Chlamydia abortus (strain DSM 27085 / S26/3) (Chlamydophila abortus)).